A 183-amino-acid chain; its full sequence is Ribulose bisphosphate carboxylase small subunit, chloroplastic 7 (183 aa).

A chloroplast-targeting transit peptide spans 1–43 (MAAAMMNKTVVVGKESVKGGVAPKVAMSRGGFLNSGIMKKDRD).

The protein belongs to the RuBisCO small chain family. Heterohexadecamer of 8 large and 8 small subunits.

Its subcellular location is the plastid. It localises to the chloroplast. In terms of biological role, ruBisCO catalyzes two reactions: the carboxylation of D-ribulose 1,5-bisphosphate, the primary event in carbon dioxide fixation, as well as the oxidative fragmentation of the pentose substrate. Both reactions occur simultaneously and in competition at the same active site. Although the small subunit is not catalytic it is essential for maximal activity. The sequence is that of Ribulose bisphosphate carboxylase small subunit, chloroplastic 7 from Acetabularia peniculus (Green alga).